A 175-amino-acid polypeptide reads, in one-letter code: FMN reductase (NADH) RutF (175 aa).

The protein belongs to the non-flavoprotein flavin reductase family. RutF subfamily.

It catalyses the reaction FMNH2 + NAD(+) = FMN + NADH + 2 H(+). In terms of biological role, catalyzes the reduction of FMN to FMNH2 which is used to reduce pyrimidine by RutA via the Rut pathway. This is FMN reductase (NADH) RutF from Serratia proteamaculans (strain 568).